A 438-amino-acid polypeptide reads, in one-letter code: Enolase (438 aa).

Q164 lines the (2R)-2-phosphoglycerate pocket. E206 (proton donor) is an active-site residue. D243, E289, and D316 together coordinate Mg(2+). The (2R)-2-phosphoglycerate site is built by K341, R370, S371, and K392. K341 functions as the Proton acceptor in the catalytic mechanism.

Belongs to the enolase family. It depends on Mg(2+) as a cofactor.

The protein localises to the cytoplasm. The protein resides in the secreted. It localises to the cell surface. It catalyses the reaction (2R)-2-phosphoglycerate = phosphoenolpyruvate + H2O. The protein operates within carbohydrate degradation; glycolysis; pyruvate from D-glyceraldehyde 3-phosphate: step 4/5. Functionally, catalyzes the reversible conversion of 2-phosphoglycerate (2-PG) into phosphoenolpyruvate (PEP). It is essential for the degradation of carbohydrates via glycolysis. This is Enolase from Borrelia garinii subsp. bavariensis (strain ATCC BAA-2496 / DSM 23469 / PBi) (Borreliella bavariensis).